The chain runs to 205 residues: CASP-like protein 3A1 (205 aa).

Topologically, residues 1–39 (MGIGMDSSTMSGPLVAHSGILDGDYEKRPAVCKMQMRFD) are cytoplasmic. Residues 40 to 60 (LANVGLRVLSLACSLVALVSM) traverse the membrane as a helical segment. Residues 61–89 (ASNQESGVVTVFGFKLPVYSKWSYSDSFE) are Extracellular-facing. The chain crosses the membrane as a helical span at residues 90–110 (FLVGASAAAAAHSLLQLLLCG). The Cytoplasmic segment spans residues 111-125 (MKMVKRASTIPSRNH). The chain crosses the membrane as a helical span at residues 126-146 (AWLLFAGDQVFAYGMLAAASA). Over 147–176 (AAGVTNLNRTGFRHSDLPNFCKPLHRFCDK) the chain is Extracellular. An N-linked (GlcNAc...) asparagine glycan is attached at Asn-154. Residues 177–197 (AAISIVFAFISSLILGGSAVL) form a helical membrane-spanning segment. The Cytoplasmic portion of the chain corresponds to 198-205 (DVFWLSKN).

This sequence belongs to the Casparian strip membrane proteins (CASP) family. Homodimer and heterodimers.

It localises to the cell membrane. This chain is CASP-like protein 3A1, found in Picea sitchensis (Sitka spruce).